Here is a 1136-residue protein sequence, read N- to C-terminus: Nuclear pore complex protein Nup133 (1136 aa).

The disordered stretch occupies residues 1–26; the sequence is MFSPRGTPGSGRRQAPRTGGRRSVSA.

This sequence belongs to the nucleoporin Nup133 family. Forms part of the Nup160 subcomplex in the nuclear pore which is composed of NUP160, NUP133, NUP107 and Nup96. This complex plays a role in RNA export and in tethering Nup98 and NUP153 to the nucleus. As to expression, widely expressed in the embryo and in adult tissues. Higher expression is observed in the brain, testes, ovary, skin, and kidney.

It localises to the nucleus. Its subcellular location is the nuclear pore complex. It is found in the chromosome. The protein resides in the centromere. The protein localises to the kinetochore. Functionally, involved in poly(A)+ RNA transport. Involved in nephrogenesis. This is Nuclear pore complex protein Nup133 from Danio rerio (Zebrafish).